A 292-amino-acid polypeptide reads, in one-letter code: Sulfhydrogenase 1 subunit gamma (292 aa).

The FAD-binding FR-type domain maps to 15-115 (YALHRVKVLK…RGPYGNGFPV (101 aa)). 4 residues coordinate [2Fe-2S] cluster: Cys253, Cys258, Cys261, and Cys273.

As to quaternary structure, heterotetramer of alpha, beta, gamma and delta subunits. The nickel-containing alpha and delta subunits constitute the hydrogenase activity. The beta and gamma subunits (flavin-containing dimer) constitute the sulfur reductase activity. FAD is required as a cofactor. It depends on [2Fe-2S] cluster as a cofactor.

The protein localises to the cytoplasm. It carries out the reaction n sulfur + H2 = (n-1) sulfur + hydrogen sulfide + H(+). Its activity is regulated as follows. Stimulated by rubredoxin at pH 7.6 but not ferredoxin. Part of a bifunctional enzyme complex that functions as an NADPH-dependent hydrogen-evolving hydrogenase with sulfur reducing activity. May play a role in hydrogen cycling during fermentative growth. Activity not exhibited with NAD. The beta and gamma subunits form the sulfur reducing component that catalyzes the cytoplasmic production of hydrogen sulfide in the presence of elemental sulfur. Not active in the presence of sodium sulfate, sodium sulfite, sodium thiosulfate or cysteine. In Pyrococcus furiosus (strain ATCC 43587 / DSM 3638 / JCM 8422 / Vc1), this protein is Sulfhydrogenase 1 subunit gamma.